Here is a 219-residue protein sequence, read N- to C-terminus: 7-cyano-7-deazaguanine synthase (219 aa).

10–20 (FSGGQDSTTCL) provides a ligand contact to ATP. Zn(2+) is bound by residues C188, C197, C200, and C203.

This sequence belongs to the QueC family. In terms of assembly, homodimer. The cofactor is Zn(2+).

The enzyme catalyses 7-carboxy-7-deazaguanine + NH4(+) + ATP = 7-cyano-7-deazaguanine + ADP + phosphate + H2O + H(+). It functions in the pathway purine metabolism; 7-cyano-7-deazaguanine biosynthesis. Catalyzes the ATP-dependent conversion of 7-carboxy-7-deazaguanine (CDG) to 7-cyano-7-deazaguanine (preQ(0)). The protein is 7-cyano-7-deazaguanine synthase of Clostridium botulinum (strain Kyoto / Type A2).